The chain runs to 197 residues: tRNA(Phe) 7-((3-amino-3-carboxypropyl)-4-demethylwyosine(37)-N(4))-methyltransferase (197 aa).

It belongs to the TYW3 family.

The enzyme catalyses 4-demethyl-7-[(3S)-3-amino-3-carboxypropyl]wyosine(37) in tRNA(Phe) + S-adenosyl-L-methionine = 7-[(3S)-3-amino-3-carboxypropyl]wyosine(37) in tRNA(Phe) + S-adenosyl-L-homocysteine + H(+). Functionally, S-adenosyl-L-methionine-dependent methyltransferase that acts as a component of the wyosine derivatives biosynthesis pathway. Probably methylates N-4 position of wybutosine-86 to produce wybutosine-72. The chain is tRNA(Phe) 7-((3-amino-3-carboxypropyl)-4-demethylwyosine(37)-N(4))-methyltransferase from Thermococcus sibiricus (strain DSM 12597 / MM 739).